The primary structure comprises 690 residues: Amino-acid acetyltransferase, mitochondrial (690 aa).

The tract at residues 62–93 is disordered; sequence RFPSVKKPKPPIPRQNQGAVETQSGKENEKPG. The segment covering 75–84 has biased composition (polar residues); it reads RQNQGAVETQ. The N-acetyltransferase domain maps to 508-679; the sequence is DGHHLTLDDP…DYEAVCRSIQ (172 aa).

Belongs to the acetyltransferase family.

Its subcellular location is the mitochondrion. The enzyme catalyses L-glutamate + acetyl-CoA = N-acetyl-L-glutamate + CoA + H(+). It functions in the pathway amino-acid biosynthesis; L-arginine biosynthesis; N(2)-acetyl-L-ornithine from L-glutamate: step 1/4. Its function is as follows. N-acetylglutamate synthase involved in arginine biosynthesis. The chain is Amino-acid acetyltransferase, mitochondrial (arg2) from Talaromyces stipitatus (strain ATCC 10500 / CBS 375.48 / QM 6759 / NRRL 1006) (Penicillium stipitatum).